A 529-amino-acid chain; its full sequence is Delayed-rectifier potassium channel regulatory subunit KCNS1 (529 aa).

Over 1 to 217 the chain is Cytoplasmic; that stretch reads MLMLLVRGTH…LTMENPGYSL (217 aa). Residues 218 to 239 form a helical membrane-spanning segment; sequence PSKLFSCVSISVVLASIAAMCI. The Extracellular segment spans residues 240–270; sequence HSLPEYQAREAAAAVAAVAAGRSPEGVRDDP. The helical transmembrane segment at 271–293 threads the bilayer; it reads VLRRLEYFCIAWFSFEVSSRLLL. Residues 294 to 304 are Cytoplasmic-facing; it reads APSTRNFFCHP. The chain crosses the membrane as a helical span at residues 305–322; it reads LNLIDIVSVLPFYLTLLA. Over 323-340 the chain is Extracellular; that stretch reads GVALGDQGGTGGKELGHL. Residues 341 to 361 traverse the membrane as a helical; Voltage-sensor segment; that stretch reads GKVVQVFRLMRIFRVLKLARH. At 362–376 the chain is on the cytoplasmic side; the sequence is STGLRSLGATLKHSY. Residues 377 to 398 traverse the membrane as a helical segment; it reads REVGILLLYLAVGVSVFSGVAY. Residues 399 to 411 lie on the Extracellular side of the membrane; sequence TAEKEEDVGFNTI. Positions 412 to 423 form an intramembrane region, helical; that stretch reads PACWWWGTVSMT. The short motif at 424-429 is the Selectivity filter element; that stretch reads TVGYGD. An intramembrane segment occupies 424–431; that stretch reads TVGYGDVV. Residues 432–438 lie on the Extracellular side of the membrane; the sequence is PVTVAGK. The helical transmembrane segment at 439-467 threads the bilayer; that stretch reads LAASGCILGGILVVALPITIIFNKFSHFY. Residues 468 to 529 are Cytoplasmic-facing; that stretch reads RRQKALEAAV…PSEPPHPQMY (62 aa). A disordered region spans residues 494-529; that stretch reads GVSEASLETSRETSQEGRSADLETQAPSEPPHPQMY. Residues 502–514 show a composition bias toward basic and acidic residues; that stretch reads TSRETSQEGRSAD.

It belongs to the potassium channel family. S (TC 1.A.1.2) subfamily. Kv9.1/KCNS1 sub-subfamily. As to quaternary structure, heterotetramer with KCNB1. Heterotetramer with KCNB2. Does not form homomultimers.

The protein localises to the cell membrane. Potassium channel regulatory subunit that modulate the delayed rectifier voltage-gated potassium channel activity of KCNB1 and KCNB2 by altering their kinetics, expression levels, and shifting the half-inactivation potential to more polarized values. While it does not form functional channels on its own, it can form functional heterotetrameric channels with KCNB1 and KCNB2. Each regulatory subunit has unique regulatory properties that can lead to extensive inhibition, significant changes in kinetics, and/or substantial shifts in the voltage dependencies of the inactivation process. The sequence is that of Delayed-rectifier potassium channel regulatory subunit KCNS1 from Macaca mulatta (Rhesus macaque).